The following is a 283-amino-acid chain: MKVYIATPYGFCSGVKKSISLAEKILSLKGEVYTLGALVHNPKVIEELSKKGIKVLGKDEIVEGKALIVRAHGLPQRDIDFYKSLGNEIYDATCPLVKKVQVLAEYLKNNKYKVIIIGEKNHPEVIGILSYTDNQGIVIEYESDIEKVEYYPKIGIVFQTTQSFDNAIQKVNLIMNKGKEIRIFNTICPETIERQEKAKKLSKIVDVALVLGGKNSANTRRLYITLSLKVPTYHIENLEEIDKNWFKEDSKVGIITGTSTPNNFVEEVLALLKSLYPLEIHLV.

Cys-12 provides a ligand contact to [4Fe-4S] cluster. 2 residues coordinate (2E)-4-hydroxy-3-methylbut-2-enyl diphosphate: His-40 and His-72. The dimethylallyl diphosphate site is built by His-40 and His-72. Positions 40 and 72 each coordinate isopentenyl diphosphate. [4Fe-4S] cluster is bound at residue Cys-94. Residue His-122 coordinates (2E)-4-hydroxy-3-methylbut-2-enyl diphosphate. Position 122 (His-122) interacts with dimethylallyl diphosphate. Residue His-122 coordinates isopentenyl diphosphate. Glu-124 serves as the catalytic Proton donor. Thr-160 contacts (2E)-4-hydroxy-3-methylbut-2-enyl diphosphate. Residue Cys-188 coordinates [4Fe-4S] cluster. 3 residues coordinate (2E)-4-hydroxy-3-methylbut-2-enyl diphosphate: Ser-216, Asn-218, and Ser-259. 3 residues coordinate dimethylallyl diphosphate: Ser-216, Asn-218, and Ser-259. Ser-216, Asn-218, and Ser-259 together coordinate isopentenyl diphosphate.

This sequence belongs to the IspH family. [4Fe-4S] cluster serves as cofactor.

The enzyme catalyses isopentenyl diphosphate + 2 oxidized [2Fe-2S]-[ferredoxin] + H2O = (2E)-4-hydroxy-3-methylbut-2-enyl diphosphate + 2 reduced [2Fe-2S]-[ferredoxin] + 2 H(+). The catalysed reaction is dimethylallyl diphosphate + 2 oxidized [2Fe-2S]-[ferredoxin] + H2O = (2E)-4-hydroxy-3-methylbut-2-enyl diphosphate + 2 reduced [2Fe-2S]-[ferredoxin] + 2 H(+). Its pathway is isoprenoid biosynthesis; dimethylallyl diphosphate biosynthesis; dimethylallyl diphosphate from (2E)-4-hydroxy-3-methylbutenyl diphosphate: step 1/1. It participates in isoprenoid biosynthesis; isopentenyl diphosphate biosynthesis via DXP pathway; isopentenyl diphosphate from 1-deoxy-D-xylulose 5-phosphate: step 6/6. Catalyzes the conversion of 1-hydroxy-2-methyl-2-(E)-butenyl 4-diphosphate (HMBPP) into a mixture of isopentenyl diphosphate (IPP) and dimethylallyl diphosphate (DMAPP). Acts in the terminal step of the DOXP/MEP pathway for isoprenoid precursor biosynthesis. The protein is 4-hydroxy-3-methylbut-2-enyl diphosphate reductase of Dictyoglomus turgidum (strain DSM 6724 / Z-1310).